A 497-amino-acid chain; its full sequence is Lysine--tRNA ligase (497 aa).

Mg(2+)-binding residues include Glu409 and Glu416.

This sequence belongs to the class-II aminoacyl-tRNA synthetase family. Homodimer. Mg(2+) is required as a cofactor.

The protein resides in the cytoplasm. It carries out the reaction tRNA(Lys) + L-lysine + ATP = L-lysyl-tRNA(Lys) + AMP + diphosphate. The protein is Lysine--tRNA ligase of Streptococcus pyogenes serotype M6 (strain ATCC BAA-946 / MGAS10394).